Consider the following 180-residue polypeptide: Small ribosomal subunit protein eS10y (180 aa).

The segment at 92–180 (LKKQQKPLGR…GGGAAGSDLP (89 aa)) is disordered. Basic and acidic residues predominate over residues 108 to 128 (DRPRGPPRGDGERRFGDRDGY). Residues 152 to 180 (FRGGAGGARQGFGRGAGGFGGGAAGSDLP) show a composition bias toward gly residues.

This sequence belongs to the eukaryotic ribosomal protein eS10 family.

Its subcellular location is the cytoplasm. The chain is Small ribosomal subunit protein eS10y (RPS10B) from Arabidopsis thaliana (Mouse-ear cress).